Here is a 956-residue protein sequence, read N- to C-terminus: Bifunctional glutamine synthetase adenylyltransferase/adenylyl-removing enzyme (956 aa).

Residues 1–450 (MENMSEQALP…YFKETVGGQE (450 aa)) form an adenylyl removase region. Residues 456–956 (EQWTAQLWSL…IYEQVLNNGQ (501 aa)) form an adenylyl transferase region.

The protein belongs to the GlnE family. Requires Mg(2+) as cofactor.

The catalysed reaction is [glutamine synthetase]-O(4)-(5'-adenylyl)-L-tyrosine + phosphate = [glutamine synthetase]-L-tyrosine + ADP. The enzyme catalyses [glutamine synthetase]-L-tyrosine + ATP = [glutamine synthetase]-O(4)-(5'-adenylyl)-L-tyrosine + diphosphate. Its function is as follows. Involved in the regulation of glutamine synthetase GlnA, a key enzyme in the process to assimilate ammonia. When cellular nitrogen levels are high, the C-terminal adenylyl transferase (AT) inactivates GlnA by covalent transfer of an adenylyl group from ATP to specific tyrosine residue of GlnA, thus reducing its activity. Conversely, when nitrogen levels are low, the N-terminal adenylyl removase (AR) activates GlnA by removing the adenylyl group by phosphorolysis, increasing its activity. The regulatory region of GlnE binds the signal transduction protein PII (GlnB) which indicates the nitrogen status of the cell. This chain is Bifunctional glutamine synthetase adenylyltransferase/adenylyl-removing enzyme, found in Shewanella loihica (strain ATCC BAA-1088 / PV-4).